The chain runs to 879 residues: Prostaglandin F2 receptor negative regulator (879 aa).

The first 25 residues, 1–25 (MGRLASRPLLLALLSLALCRGRVVR), serve as a signal peptide directing secretion. Ig-like C2-type domains are found at residues 26-129 (VPTA…ATVQ) and 149-268 (PSAR…KAVE). The Extracellular portion of the chain corresponds to 26 to 832 (VPTATLVRVV…MDVLNAFKYP (807 aa)). Disulfide bonds link C43–C119 and C169–C247. N44 carries an N-linked (GlcNAc...) asparagine glycan. T271 bears the Phosphothreonine mark. Ig-like C2-type domains follow at residues 276 to 394 (PSVL…EAVS), 406 to 536 (PDYQ…DVFS), 544 to 662 (ALED…AWSP), and 688 to 813 (PIFN…AEIH). 4 N-linked (GlcNAc...) asparagine glycosylation sites follow: N286, N300, N383, and N413. C299 and C373 are oxidised to a cystine. Positions 424–427 (PTEL) match the Endoplasmic reticulum retention signal motif. A disulfide bridge links C429 with C515. N525, N600, N618, and N691 each carry an N-linked (GlcNAc...) asparagine glycan. A disulfide bridge connects residues C571 and C655. A Cell attachment site motif is present at residues 703-705 (RGD). A disulfide bond links C711 and C793. Residues 833–853 (LLIGVGLSTVIGLLSCLIGYC) traverse the membrane as a helical segment. Residues 854-879 (SSHWCCKKEVQETRRERRRLMSMEMD) are Cytoplasmic-facing.

Interacts with CD9 and CD81. Part of a complex composed of CD9, CD81 and IGSF8. Also seems to interact with CD63, CD82 and CD151.

It is found in the endoplasmic reticulum membrane. It localises to the golgi apparatus. The protein resides in the trans-Golgi network membrane. Inhibits the binding of prostaglandin F2-alpha (PGF2-alpha) to its specific FP receptor, by decreasing the receptor number rather than the affinity constant. Functional coupling with the prostaglandin F2-alpha receptor seems to occur. In myoblasts, associates with tetraspanins CD9 and CD81 to prevent myotube fusion during muscle regeneration. This Homo sapiens (Human) protein is Prostaglandin F2 receptor negative regulator (PTGFRN).